The sequence spans 860 residues: Mycobactin import ATP-binding/permease protein IrtA (860 aa).

The Cytoplasmic segment spans residues 1–293 (MARGIQGVMM…GRLLAPLKTT (293 aa)). The region spanning 15 to 124 (ARDHQATVVS…LGSAGFSVPE (110 aa)) is the FAD-binding FR-type domain. FAD is bound by residues 70-73 (RAYT), 87-91 (DVVLH), 97-98 (AS), and 238-240 (TEG). The disordered stretch occupies residues 242 to 275 (AMGTKRGDDDKTPEVNPAPRADKPEAPAPAAAGR). Residues 294–314 (LIISGVLQAIITLVQLAPFVL) traverse the membrane as a helical segment. Residues 295-577 (IISGVLQAII…IAYGLGGIRG (283 aa)) form the ABC transmembrane type-1 domain. Over 315 to 335 (LVELARLLLSGASSDRLWTLG) the chain is Periplasmic. The helical transmembrane segment at 336–356 (VVAISLLGTGSFLAAALTLWL) threads the bilayer. The Cytoplasmic portion of the chain corresponds to 357 to 409 (HLVDARFARDLRTGLLTKMSRLPLGWFTARGSGSIKQLVQDDTLSLHYLITHA). The helical transmembrane segment at 410 to 430 (IPDAVAAVIAPVAVLVYLFVV) threads the bilayer. Topologically, residues 431-433 (DWR) are periplasmic. Residues 434 to 454 (LALVMFVPVLIYLVLMTVMTI) traverse the membrane as a helical segment. Over 455-525 (QSGPKIAQSQ…KKSMMDLVTR (71 aa)) the chain is Cytoplasmic. A helical transmembrane segment spans residues 526–546 (PGTFLWLIVAVGTPMITSGAM). Residues 547-550 (DPVD) are Periplasmic-facing. Residues 551-571 (ILPFLLLGTTFGVRLLGIAYG) form a helical membrane-spanning segment. Over 572-860 (LGGIRGGMLA…AAGPTGEAVR (289 aa)) the chain is Cytoplasmic. The 234-residue stretch at 609-842 (VVFDNVTFGY…AGRYRQLWET (234 aa)) folds into the ABC transporter domain. 642–649 (GPSGSGKS) serves as a coordination point for ATP.

It belongs to the ABC transporter superfamily. Siderophore-Fe(3+) uptake transporter (SIUT) (TC 3.A.1.21) family. In terms of assembly, forms a heterodimer with IrtB. FAD serves as cofactor.

The protein localises to the cell inner membrane. Functionally, part of the ABC transporter complex IrtAB involved in the import of iron-bound mycobactin (Fe-MBT) and carboxymycobactin (Fe-cMBT). Has a preference for Fe-MBT over Fe-cMBT. Mycobactins are then reduced by the siderophore interaction domain to facilitate iron release in the bacterial cell. Transmembrane domains (TMD) form a pore in the membrane and the ATP-binding domain (NBD) is responsible for energy generation. The chain is Mycobactin import ATP-binding/permease protein IrtA from Mycolicibacterium smegmatis (strain ATCC 700084 / mc(2)155) (Mycobacterium smegmatis).